The chain runs to 71 residues: Palustrin-2AJ2 (71 aa).

The first 22 residues, 1–22 (MFTLKKPLLVLLFLGTVSLSLC), serve as a signal peptide directing secretion. A propeptide spanning residues 23 to 40 (EQERAADDDEGEVIEEEV) is cleaved from the precursor. An intrachain disulfide couples C65 to C71.

Expressed by the skin glands.

Its subcellular location is the secreted. Displays broad-spectrum antibacterial activity against a range of Gram-positive and Gram-negative bacteria. Has low hemolytic activity, low cytotoxicity and low antioxidant activity. The protein is Palustrin-2AJ2 of Amolops jingdongensis (Chinese torrent frog).